We begin with the raw amino-acid sequence, 263 residues long: Bidirectional sugar transporter SWEET3 (263 aa).

At 1-7 the chain is on the extracellular side; the sequence is MGDKLRL. The chain crosses the membrane as a helical span at residues 8-28; that stretch reads SIGILGNGASLLLYTAPIVTF. One can recognise a MtN3/slv 1 domain in the interval 9 to 97; the sequence is IGILGNGASL…FIYFYYASPK (89 aa). The Cytoplasmic portion of the chain corresponds to 29 to 42; it reads SRVFKKKSTEEFSC. A helical transmembrane segment spans residues 43–63; sequence FPYVMTLFNCLIYTWYGLPIV. The Extracellular portion of the chain corresponds to 64–71; sequence SHLWENLP. The chain crosses the membrane as a helical span at residues 72–92; that stretch reads LVTINGVGILLESIFIFIYFY. The Cytoplasmic segment spans residues 93–103; sequence YASPKEKIKVG. The helical transmembrane segment at 104–124 threads the bilayer; the sequence is VTFVPVIVGFGLTTAISALVF. At 125 to 132 the chain is on the extracellular side; the sequence is DDHRHRKS. The helical transmembrane segment at 133–153 threads the bilayer; the sequence is FVGSVGLVASISMYGSPLVVM. Residues 133–217 form the MtN3/slv 2 domain; that stretch reads FVGSVGLVAS…ILYFKYKNKK (85 aa). Residues 154–165 lie on the Cytoplasmic side of the membrane; it reads KKVIETRSVEYM. The helical transmembrane segment at 166-186 threads the bilayer; the sequence is PFYLSFFSFLASSLWLAYGLL. Topologically, residues 187–190 are extracellular; sequence SHDL. Residues 191–211 form a helical membrane-spanning segment; the sequence is FLASPNMVATPLGILQLILYF. Topologically, residues 212 to 263 are cytoplasmic; sequence KYKNKKDLAPTTMVITKRNDHDDKNKATLEFVVDVDRNSDTNEKNSNNASSI.

The protein belongs to the SWEET sugar transporter family. In terms of assembly, forms heterooligomers with SWEET11, SWEET13 and SWEET17.

Its subcellular location is the cell membrane. Its function is as follows. Mediates both low-affinity uptake and efflux of sugar across the plasma membrane. The polypeptide is Bidirectional sugar transporter SWEET3 (Arabidopsis thaliana (Mouse-ear cress)).